The following is a 382-amino-acid chain: Dual-specificity RNA methyltransferase RlmN (382 aa).

Catalysis depends on Glu95, which acts as the Proton acceptor. The region spanning 101 to 347 is the Radical SAM core domain; sequence EDDRGTLCIS…TTVRKTRGDD (247 aa). The cysteines at positions 108 and 352 are disulfide-linked. Cys115, Cys119, and Cys122 together coordinate [4Fe-4S] cluster. Residues 178 to 179, Ser210, 232 to 234, and Asn309 contribute to the S-adenosyl-L-methionine site; these read GE and SLH. The S-methylcysteine intermediate role is filled by Cys352.

It belongs to the radical SAM superfamily. RlmN family. The cofactor is [4Fe-4S] cluster.

Its subcellular location is the cytoplasm. It catalyses the reaction adenosine(2503) in 23S rRNA + 2 reduced [2Fe-2S]-[ferredoxin] + 2 S-adenosyl-L-methionine = 2-methyladenosine(2503) in 23S rRNA + 5'-deoxyadenosine + L-methionine + 2 oxidized [2Fe-2S]-[ferredoxin] + S-adenosyl-L-homocysteine. The enzyme catalyses adenosine(37) in tRNA + 2 reduced [2Fe-2S]-[ferredoxin] + 2 S-adenosyl-L-methionine = 2-methyladenosine(37) in tRNA + 5'-deoxyadenosine + L-methionine + 2 oxidized [2Fe-2S]-[ferredoxin] + S-adenosyl-L-homocysteine. Its function is as follows. Specifically methylates position 2 of adenine 2503 in 23S rRNA and position 2 of adenine 37 in tRNAs. m2A2503 modification seems to play a crucial role in the proofreading step occurring at the peptidyl transferase center and thus would serve to optimize ribosomal fidelity. The protein is Dual-specificity RNA methyltransferase RlmN of Bordetella avium (strain 197N).